The following is a 457-amino-acid chain: Chromosomal replication initiator protein DnaA (457 aa).

The interval 1–81 (MERDLSQLWQ…NNTDLVIKVQ (81 aa)) is domain I, interacts with DnaA modulators. Residues 81–119 (QEGSKPAARKVVAQQEIANTPVQHSAPMPENEPQAAFRS) are domain II. The tract at residues 120-337 (NLNQHHLFEN…GALNRVHANA (218 aa)) is domain III, AAA+ region. ATP-binding residues include Gly-165, Gly-167, Lys-168, and Thr-169. The domain IV, binds dsDNA stretch occupies residues 338–457 (DFTGKAITID…WSNLIRTLSA (120 aa)).

The protein belongs to the DnaA family. As to quaternary structure, oligomerizes as a right-handed, spiral filament on DNA at oriC.

It localises to the cytoplasm. Functionally, plays an essential role in the initiation and regulation of chromosomal replication. ATP-DnaA binds to the origin of replication (oriC) to initiate formation of the DNA replication initiation complex once per cell cycle. Binds the DnaA box (a 9 base pair repeat at the origin) and separates the double-stranded (ds)DNA. Forms a right-handed helical filament on oriC DNA; dsDNA binds to the exterior of the filament while single-stranded (ss)DNA is stabiized in the filament's interior. The ATP-DnaA-oriC complex binds and stabilizes one strand of the AT-rich DNA unwinding element (DUE), permitting loading of DNA polymerase. After initiation quickly degrades to an ADP-DnaA complex that is not apt for DNA replication. Binds acidic phospholipids. The chain is Chromosomal replication initiator protein DnaA from Mannheimia succiniciproducens (strain KCTC 0769BP / MBEL55E).